We begin with the raw amino-acid sequence, 767 residues long: MTTSPSEKTSFNIDTVANAATTPETELPWAELGLKDNEFARINEILGRRPTAAELAMYSVMWSEHCSYKSSKVHLSQFGEKVTEEMKKHLLVGIGENAGVVDIGDGWAVTFKVESHNHPSFVEPYQGAATGIGGIVRDIISMGARPVAVMDPLRFGAIDHPDTARLVHGIVSGIGGYGNSLGLPNIGGEVVFDSVYQGNPLVNALAVGVLRHEDIRLANASGVGNRVVLFGARTGGDGIGGASVLASESFDSTKPSKRPAVQVGDPFAEKVLIECCLELFKASIVDGIQDLGAAGISCATSELASNGEGGMHVELTSVLLRDPTLTPGEILMSESQERMMAVVTPENVAAFEAVMAKWDVEYSWLGEVTDTGRLIIDWDGETIVDVDPRTVAHDGPVYNRPFHRPEWLDALQADSFLASGVAEVPADLGAAVVELMSSPNMASKSWVTDQYDRYVQGNTAQAMPDDAGVIRVDETTGLGVALSTDANGRYCYLNPREGAKLALAEAYRNVATSGARPLAVTDCLNFGSPEDPEVMWQFAESVTGLADACQELGVPVTGGNVSLYNQTGGVAIHPTPVVGVLGVFDDVARSTPSGWRVDGQAIYLLGTTRAELDGSEWANLRGHLGGQPPVVDLGREKELAEILINASRDGMVDAAHDLSEGGLAAALVESSLRFGVGARIGLDELAVRDGISIFEALFSESQARALVSVPRSEEVRFNDMCTARGFEHLRLGVVDAESGALDVQGAFTLSLDELREAHEATLPKYFG.

Residue His65 is part of the active site. Residues Tyr68 and Lys112 each contribute to the ATP site. Mg(2+) is bound at residue Glu114. Substrate is bound by residues 115–118 (SHNH) and Arg137. The active-site Proton acceptor is the His116. Residue Asp138 coordinates Mg(2+). Gln262 serves as a coordination point for substrate. Asp290 serves as a coordination point for Mg(2+). 334 to 336 (ESQ) contributes to the substrate binding site. ATP-binding residues include Asp522 and Gly559. Asn560 lines the Mg(2+) pocket. Ser562 is a substrate binding site.

This sequence belongs to the FGAMS family. In terms of assembly, monomer. Part of the FGAM synthase complex composed of 1 PurL, 1 PurQ and 2 PurS subunits.

The protein resides in the cytoplasm. It catalyses the reaction N(2)-formyl-N(1)-(5-phospho-beta-D-ribosyl)glycinamide + L-glutamine + ATP + H2O = 2-formamido-N(1)-(5-O-phospho-beta-D-ribosyl)acetamidine + L-glutamate + ADP + phosphate + H(+). The protein operates within purine metabolism; IMP biosynthesis via de novo pathway; 5-amino-1-(5-phospho-D-ribosyl)imidazole from N(2)-formyl-N(1)-(5-phospho-D-ribosyl)glycinamide: step 1/2. In terms of biological role, part of the phosphoribosylformylglycinamidine synthase complex involved in the purines biosynthetic pathway. Catalyzes the ATP-dependent conversion of formylglycinamide ribonucleotide (FGAR) and glutamine to yield formylglycinamidine ribonucleotide (FGAM) and glutamate. The FGAM synthase complex is composed of three subunits. PurQ produces an ammonia molecule by converting glutamine to glutamate. PurL transfers the ammonia molecule to FGAR to form FGAM in an ATP-dependent manner. PurS interacts with PurQ and PurL and is thought to assist in the transfer of the ammonia molecule from PurQ to PurL. This chain is Phosphoribosylformylglycinamidine synthase subunit PurL, found in Renibacterium salmoninarum (strain ATCC 33209 / DSM 20767 / JCM 11484 / NBRC 15589 / NCIMB 2235).